A 967-amino-acid polypeptide reads, in one-letter code: Probable disease resistance protein At1g61190 (967 aa).

A coiled-coil region spans residues 20-68 (RCLCGKGYIRNLEKNLRALQREMEDLRATQHEVQNKVAREESRHQQRLE). The tract at residues 132–153 (GNFDEVSQPPPRSEVEERPTQP) is disordered. The 304-residue stretch at 138–441 (SQPPPRSEVE…CEGFIGEDQV (304 aa)) folds into the NB-ARC domain. Residue 180-187 (GMGGVGKT) participates in ATP binding. 5 LRR repeats span residues 516–537 (AVRR…SKCS), 538–559 (ELTT…FIRY), 562–585 (KLVV…SGLV), 586–608 (SLQY…KELK), and 609–631 (KLIF…SRLL).

This sequence belongs to the disease resistance NB-LRR family.

In terms of biological role, probable disease resistance protein. The polypeptide is Probable disease resistance protein At1g61190 (Arabidopsis thaliana (Mouse-ear cress)).